Consider the following 420-residue polypeptide: MDRIRIRGGHPLAGEIAIGGAKNAALPVMACGLLTDDRLVLNNVPRLADIGTMKALIEQHGIAVERLDPLGRILSLGGQITNTEAPYDIVRKMRASVLVLGPLLARCGEARVSLPGGCAIGTRPVDMHLKGLEQMGAVITLESGYIDARVQGRLRGADIVLPMPSVGATENLLMAASLADGITTLRNAAREPEIEDLAHCLISMGAKIEGIGTGELRIEGVKHLHGAEHSIIPDRIETGSYACAAAITGGRLLLRNARLDHLGAVARTLREAGVEIEEQDSGLLVSRRNGLHGVDVMTEPYPGFPTDMQAQYMVLMSVAEGASMVTETIFENRFMHVPELNRMGARINVHGASAIVRGVSQLSGAPVMATDLRASLSLILAGLAAEGETIVNRVYHLDRGYESVAEKLSACGADIERISG.

A phosphoenolpyruvate-binding site is contributed by 22–23 (KN). Arginine 94 contributes to the UDP-N-acetyl-alpha-D-glucosamine binding site. Cysteine 118 serves as the catalytic Proton donor. Cysteine 118 is modified (2-(S-cysteinyl)pyruvic acid O-phosphothioketal). Aspartate 307 and isoleucine 329 together coordinate UDP-N-acetyl-alpha-D-glucosamine.

The protein belongs to the EPSP synthase family. MurA subfamily.

The protein resides in the cytoplasm. It catalyses the reaction phosphoenolpyruvate + UDP-N-acetyl-alpha-D-glucosamine = UDP-N-acetyl-3-O-(1-carboxyvinyl)-alpha-D-glucosamine + phosphate. It participates in cell wall biogenesis; peptidoglycan biosynthesis. Cell wall formation. Adds enolpyruvyl to UDP-N-acetylglucosamine. The polypeptide is UDP-N-acetylglucosamine 1-carboxyvinyltransferase (Granulibacter bethesdensis (strain ATCC BAA-1260 / CGDNIH1)).